The following is a 189-amino-acid chain: Phosphoheptose isomerase (189 aa).

Positions 34-189 (LVDALGNGKK…CDLLEKRLFG (156 aa)) constitute an SIS domain. 49 to 51 (NGG) is a substrate binding site. Residues histidine 58 and glutamate 62 each contribute to the Zn(2+) site. Residues glutamate 62, 91 to 92 (ND), 117 to 119 (STS), serine 122, and glutamine 169 contribute to the substrate site. Residues glutamine 169 and histidine 177 each contribute to the Zn(2+) site.

The protein belongs to the SIS family. GmhA subfamily. Homotetramer. Zn(2+) serves as cofactor.

It localises to the cytoplasm. The enzyme catalyses 2 D-sedoheptulose 7-phosphate = D-glycero-alpha-D-manno-heptose 7-phosphate + D-glycero-beta-D-manno-heptose 7-phosphate. Its pathway is carbohydrate biosynthesis; D-glycero-D-manno-heptose 7-phosphate biosynthesis; D-glycero-alpha-D-manno-heptose 7-phosphate and D-glycero-beta-D-manno-heptose 7-phosphate from sedoheptulose 7-phosphate: step 1/1. Functionally, catalyzes the isomerization of sedoheptulose 7-phosphate in D-glycero-D-manno-heptose 7-phosphate. The protein is Phosphoheptose isomerase of Geotalea uraniireducens (strain Rf4) (Geobacter uraniireducens).